A 433-amino-acid chain; its full sequence is MTDFFAGIPQIRYEGEGSSNEFAYRHYNPDEMILGKRMEDHLRFAVAWWHSFAWPGGDPFGAQTLERPWFGDTLDLARMKADVAFEMFEILGAPFFCFHDADIRPEGATFAESKRNLEAIVDHIGARMERSKTRLLWGTANLFSHRRFMSGAATNPDPDVFAWSAATVKACMDATKKLGGANYVLWGGREGYETLLNTDLKREAEQAGRFLQMVVDYKYKIGFEGTILIEPKPQEPSKHQYDYDVATVYGFLKRFGLENEVKLNVEQGHAILAGHSFEHELALAASLGILGSIDMNRNDYQSGWDTDQFPNNHPEMALAYYEVLRAGGFTTGGTNFDAKIRRQSLDPEDLILAHVGGMDTCARALKAAARLYEDGSLERARADRYAGWETPEAKAMLSSSLEEIEARVLAEDINPQPRSGRQERLENLWNRFV.

Active-site residues include histidine 99 and aspartate 102. Mg(2+)-binding residues include glutamate 230, glutamate 266, histidine 269, aspartate 294, aspartate 305, aspartate 307, and aspartate 337.

The protein belongs to the xylose isomerase family. In terms of assembly, homotetramer. Mg(2+) serves as cofactor.

The protein resides in the cytoplasm. The enzyme catalyses alpha-D-xylose = alpha-D-xylulofuranose. In Cereibacter sphaeroides (strain ATCC 17025 / ATH 2.4.3) (Rhodobacter sphaeroides), this protein is Xylose isomerase.